The sequence spans 1023 residues: NLR family CARD domain-containing protein 4 (1023 aa).

One can recognise a CARD domain in the interval 1 to 88 (MNFIKENSQA…PVYQDLTGHS (88 aa)). Residues 95-298 (EEDLDVLAQS…HVGALTVEVG (204 aa)) are nucleotide-binding domain (NBD). The NACHT domain maps to 163 to 476 (SPCLIEGESG…VSKGNSYLKK (314 aa)). 169 to 176 (GESGKGKS) provides a ligand contact to ATP. Residues 356–463 (AHTQTMLFQT…RLSSLLKSRE (108 aa)) are winged-helix domain (WHD). At Ser-533 the chain carries Phosphoserine. LRR repeat units follow at residues 578 to 598 (FFQG…LFDF), 655 to 678 (MQKF…DIKY), 734 to 757 (VTDL…LADS), 761 to 784 (LKNL…SLAE), 786 to 811 (LRNL…DYIV), 823 to 846 (EMKL…LHNL), 847 to 869 (VKLS…ALQG), 877 to 901 (LEQL…LLKQ), 910 to 932 (KLGL…FLEM), 935 to 962 (LRDL…VFEN), 964 to 984 (KQLV…ALVR), and 998 to 1020 (EARL…TFKL).

As to quaternary structure, homooligomer; homooligomerizes following activation of Naip proteins by pathogenic proteins such as S.typhimurium (Salmonella) flagellin or PrgJ. Component of the NLRC4 inflammasome, at least composed of NLRC4, caspase-1 (CASP1) and some NAIP family member. Interacts with EIF2AK2/PKR. Phosphorylated at Ser-533 following infection of macrophages with S.typhimurium (Salmonella). Phosphorylation is essential for NLRC4 inflammasome function to promote caspase-1 activation and pyroptosis. PRKCD phosphorylates Ser-533 in vitro.

It localises to the cytoplasm. Its subcellular location is the cytosol. Functionally, key component of inflammasomes that indirectly senses specific proteins from pathogenic bacteria and fungi and responds by assembling an inflammasome complex that promotes caspase-1 activation, cytokine production and macrophage pyroptosis. The NLRC4 inflammasome is activated as part of the innate immune response to a range of intracellular bacteria. This chain is NLR family CARD domain-containing protein 4 (Nlrc4), found in Rattus norvegicus (Rat).